Reading from the N-terminus, the 63-residue chain is Large ribosomal subunit protein bL28 (63 aa).

It belongs to the bacterial ribosomal protein bL28 family.

The chain is Large ribosomal subunit protein bL28 from Clostridium acetobutylicum (strain ATCC 824 / DSM 792 / JCM 1419 / IAM 19013 / LMG 5710 / NBRC 13948 / NRRL B-527 / VKM B-1787 / 2291 / W).